The chain runs to 103 residues: V-type sodium ATPase subunit G (103 aa).

Belongs to the V-ATPase F subunit family.

Functionally, involved in ATP-driven sodium extrusion. In Enterococcus hirae (strain ATCC 9790 / DSM 20160 / JCM 8729 / LMG 6399 / NBRC 3181 / NCIMB 6459 / NCDO 1258 / NCTC 12367 / WDCM 00089 / R), this protein is V-type sodium ATPase subunit G (ntpG).